The chain runs to 304 residues: D-alanine--D-alanine ligase (304 aa).

Positions 103–301 (KQVWLALGLP…FDDLVWRILE (199 aa)) constitute an ATP-grasp domain. 132–187 (VEMLGFPVIIKPAKEGSSVGVSRVFALEHLEEAVALAARYEGELLMEQLIEGDELT) serves as a coordination point for ATP. Residues Asp254, Glu268, and Asn270 each coordinate Mg(2+).

The protein belongs to the D-alanine--D-alanine ligase family. Mg(2+) serves as cofactor. Requires Mn(2+) as cofactor.

The protein resides in the cytoplasm. It carries out the reaction 2 D-alanine + ATP = D-alanyl-D-alanine + ADP + phosphate + H(+). Its pathway is cell wall biogenesis; peptidoglycan biosynthesis. Functionally, cell wall formation. The protein is D-alanine--D-alanine ligase of Xylella fastidiosa (strain Temecula1 / ATCC 700964).